The following is a 558-amino-acid chain: Atlastin-1 (558 aa).

Residues 1 to 29 (MAKSRRDRNSWGGFSEKSSDWSSEEEEPV) form a disordered region. An N-terminal hypervariable region (HVR) region spans residues 1-34 (MAKSRRDRNSWGGFSEKSSDWSSEEEEPVRKAGP). Topologically, residues 1 to 449 (MAKSRRDRNS…NIFHAARTPA (449 aa)) are cytoplasmic. Phosphoserine is present on residues Ser-10, Ser-22, and Ser-23. The GB1/RHD3-type G domain occupies 64-309 (DKEVVAVSVA…LIPWLLSPES (246 aa)). Arg-77, Lys-78, Gly-79, Lys-80, Ser-81, Phe-82, Gln-148, Arg-217, Asp-218, Val-276, and Asn-279 together coordinate GDP. Arg-77, Lys-78, Gly-79, Lys-80, Ser-81, and Phe-82 together coordinate GTP. Ser-81 is a Mg(2+) binding site. GTP contacts are provided by Arg-217, Asp-218, and Val-276. Residues 347-438 (MLQATAEANN…YIQYIKHNDS (92 aa)) are 3HB (three-helix bundle) domain. Lys-395 carries the N6-acetyllysine modification. Residues 412 to 439 (EFSRRYLQQLESEIDELYIQYIKHNDSK) are a coiled coil. The interval 439–447 (KNIFHAART) is linker. The chain crosses the membrane as a helical span at residues 450-470 (TLFVVIFITYVIAGVTGFIGL). A topological domain (lumenal) is located at residue Asp-471. A helical transmembrane segment spans residues 472 to 492 (IIASLCNMIMGLTLITLCTWA). Over 493-558 (YIRYSGEYRE…PTEQPEKKKI (66 aa)) the chain is Cytoplasmic. Residues 521–558 (NEALYKLYSAAATHRHLYQQAFPAPKSEPTEQPEKKKI) are autoinhibitory domain.

The protein belongs to the TRAFAC class dynamin-like GTPase superfamily. GB1/RHD3 GTPase family. GB1 subfamily. Monomeric and homodimeric. The homodimer, transiently formed by two molecules on opposing membranes, is the active form mediating ER membrane fusion. Interacts with REEP1, REEP5, RTN3 and RTN4 (via the transmembrane region); these proteins are involved in endoplasmic reticulum tubular network organization. Interacts with ZFYVE27; both proteins are involved in endoplasmic reticulum tubular network organization. Interacts with ARL6IP1; both proteins are involved in endoplasmic reticulum tubular network organization. Interacts with SPAST; the interaction is direct, could recruit SPAST to Golgi membranes. Interacts (via N-terminal region) with MAP4K4 (via CNH regulatory domain). May interact with TMED2. Interacts with CPT1C. Post-translationally, phosphorylated. Phosphorylation, by different kinases, of the N-terminal hypervariable region (HVR) regulates the ATL1-mediated membrane tethering step. In terms of tissue distribution, detected in brain where it is abundant in lamina V of the cerebral cortex. Also expressed within the hippocampus, mainly in pyramidal neurons in CA1 and CA3. Weakly expressed in the striatum and more robustly in amygdala and several thalamic nuclei. Also detected in several mesopontine nuclei (at protein level).

It is found in the endoplasmic reticulum membrane. The protein resides in the golgi apparatus membrane. Its subcellular location is the cell projection. The protein localises to the axon. The catalysed reaction is GTP + H2O = GDP + phosphate + H(+). In terms of biological role, atlastin-1 (ATL1) is a membrane-anchored GTPase that mediates the GTP-dependent fusion of endoplasmic reticulum (ER) membranes, maintaining the continuous ER network. It facilitates the formation of three-way junctions where ER tubules intersect. Two atlastin-1 on neighboring ER tubules bind GTP and form loose homodimers through the GB1/RHD3-type G domains and 3HB regions. Upon GTP hydrolysis, the 3HB regions tighten, pulling the membranes together to drive their fusion. After fusion, the homodimer disassembles upon release of inorganic phosphate (Pi). Subsequently, GDP dissociates, resetting the monomers to a conformation ready for a new fusion cycle. May also regulate more or less directly Golgi biogenesis. Indirectly regulates axonal development. The protein is Atlastin-1 of Rattus norvegicus (Rat).